A 437-amino-acid chain; its full sequence is Probable receptor-like serine/threonine-protein kinase At4g34500 (437 aa).

The helical transmembrane segment at 25 to 45 threads the bilayer; sequence LVIAICSVFILLISLLIFLFV. In terms of domain architecture, Protein kinase spans 145–426; that stretch reads FSDDNMIGEG…MLEAEDFPFR (282 aa). Residues 151 to 159 and K173 contribute to the ATP site; that span reads IGEGGYGVV. Phosphotyrosine is present on Y220. Catalysis depends on D273, which acts as the Proton acceptor. Residue S277 is modified to Phosphoserine. 2 positions are modified to phosphothreonine: T307 and T312. Residue Y320 is modified to Phosphotyrosine.

This sequence belongs to the protein kinase superfamily. Ser/Thr protein kinase family.

The protein localises to the cell membrane. It carries out the reaction L-seryl-[protein] + ATP = O-phospho-L-seryl-[protein] + ADP + H(+). The catalysed reaction is L-threonyl-[protein] + ATP = O-phospho-L-threonyl-[protein] + ADP + H(+). The sequence is that of Probable receptor-like serine/threonine-protein kinase At4g34500 from Arabidopsis thaliana (Mouse-ear cress).